The chain runs to 465 residues: UDP-N-acetylmuramate--L-alanine ligase (465 aa).

Position 114–120 (114–120) interacts with ATP; that stretch reads GTHGKTT.

It belongs to the MurCDEF family.

It is found in the cytoplasm. It catalyses the reaction UDP-N-acetyl-alpha-D-muramate + L-alanine + ATP = UDP-N-acetyl-alpha-D-muramoyl-L-alanine + ADP + phosphate + H(+). The protein operates within cell wall biogenesis; peptidoglycan biosynthesis. In terms of biological role, cell wall formation. The polypeptide is UDP-N-acetylmuramate--L-alanine ligase (Chelativorans sp. (strain BNC1)).